The following is a 412-amino-acid chain: Short-chain specific acyl-CoA dehydrogenase, mitochondrial (412 aa).

The N-terminal 24 residues, 1 to 24 (MAAALLARASGPARRALCPRAWRQ), are a transit peptide targeting the mitochondrion. Phosphothreonine is present on Thr27. Lys51 is subject to N6-acetyllysine; alternate. At Lys51 the chain carries N6-succinyllysine; alternate. Position 72 is an N6-acetyllysine (Lys72). Lys129 carries the N6-acetyllysine; alternate modification. Lys129 carries the N6-succinyllysine; alternate modification. FAD is bound by residues 152-161 (FALSEPGNGS) and 185-187 (WIT). Substrate is bound at residue Ser161. N6-acetyllysine is present on Lys208. Lys262 is subject to N6-acetyllysine; alternate. Lys262 carries the N6-succinyllysine; alternate modification. 269–272 (DMGR) contacts substrate. Residue Arg297 participates in FAD binding. At Lys306 the chain carries N6-acetyllysine; alternate. At Lys306 the chain carries N6-succinyllysine; alternate. FAD-binding positions include Gln308 and 365–369 (QILGG). Glu392 functions as the Proton acceptor in the catalytic mechanism. Gly393 contacts substrate. Position 394–396 (394–396 (TSE)) interacts with FAD.

It belongs to the acyl-CoA dehydrogenase family. Homotetramer. The cofactor is FAD.

The protein resides in the mitochondrion matrix. The enzyme catalyses a short-chain 2,3-saturated fatty acyl-CoA + oxidized [electron-transfer flavoprotein] + H(+) = a short-chain (2E)-enoyl-CoA + reduced [electron-transfer flavoprotein]. It catalyses the reaction butanoyl-CoA + oxidized [electron-transfer flavoprotein] + H(+) = (2E)-butenoyl-CoA + reduced [electron-transfer flavoprotein]. The catalysed reaction is pentanoyl-CoA + oxidized [electron-transfer flavoprotein] + H(+) = (2E)-pentenoyl-CoA + reduced [electron-transfer flavoprotein]. It carries out the reaction hexanoyl-CoA + oxidized [electron-transfer flavoprotein] + H(+) = (2E)-hexenoyl-CoA + reduced [electron-transfer flavoprotein]. It participates in lipid metabolism; mitochondrial fatty acid beta-oxidation. Functionally, short-chain specific acyl-CoA dehydrogenase is one of the acyl-CoA dehydrogenases that catalyze the first step of mitochondrial fatty acid beta-oxidation, an aerobic process breaking down fatty acids into acetyl-CoA and allowing the production of energy from fats. The first step of fatty acid beta-oxidation consists in the removal of one hydrogen from C-2 and C-3 of the straight-chain fatty acyl-CoA thioester, resulting in the formation of trans-2-enoyl-CoA. Among the different mitochondrial acyl-CoA dehydrogenases, short-chain specific acyl-CoA dehydrogenase acts specifically on acyl-CoAs with saturated 4 to 6 carbons long primary chains. This Homo sapiens (Human) protein is Short-chain specific acyl-CoA dehydrogenase, mitochondrial (ACADS).